The chain runs to 223 residues: Nitrate reductase gamma chain (223 aa).

A helical transmembrane segment spans residues 2-27; that stretch reads SGQILWGIMPYIVLTIFIGGHIYRYQ. The Cytoplasmic portion of the chain corresponds to 28–45; sequence HDQFGWTAKSSELLEKKK. Residues 46 to 68 form a helical membrane-spanning segment; sequence LAAGSTLFHWGLLCVVGGHVMGI. Histidine 54 and histidine 64 together coordinate heme b. The Extracellular portion of the chain corresponds to 69–81; sequence LIPEGVYASLGIS. A helical membrane pass occupies residues 82–111; that stretch reads EHMYHKMAIGAGLPAGIAACTGLVILTYRR. Residues 112–123 lie on the Cytoplasmic side of the membrane; sequence LFDKRIRKTSSP. The chain crosses the membrane as a helical span at residues 124 to 147; that stretch reads SDILTLLLLLFMMLSGVAATFLNI. The Extracellular segment spans residues 148–180; it reads DSKGFDYRTTVGPWFREIVLFRPDASLMESVPL. The chain crosses the membrane as a helical span at residues 181 to 196; it reads WFKFHIVIGYVVFILW. Histidine 185 and histidine 203 together coordinate heme b. Topologically, residues 197–223 are cytoplasmic; it reads PFTRLVHVFSLPLKYLTRSYVVYRKRS.

Heme serves as cofactor.

The protein resides in the cell membrane. It carries out the reaction nitrate + a quinol = a quinone + nitrite + H2O. In terms of biological role, the gamma chain is a membrane-embedded heme-iron unit resembling cytochrome b, which transfers electrons from quinones to the beta subunit. This Bacillus subtilis (strain 168) protein is Nitrate reductase gamma chain (narI).